We begin with the raw amino-acid sequence, 340 residues long: Heat-inducible transcription repressor HrcA (340 aa).

This sequence belongs to the HrcA family.

Its function is as follows. Negative regulator of class I heat shock genes (grpE-dnaK-dnaJ and groELS operons). Prevents heat-shock induction of these operons. In Clavibacter michiganensis subsp. michiganensis (strain NCPPB 382), this protein is Heat-inducible transcription repressor HrcA.